We begin with the raw amino-acid sequence, 188 residues long: Peptidyl-prolyl cis-trans isomerase H (188 aa).

At Ala2 the chain carries N-acetylalanine. Positions 14–176 (FFDVSIGGQE…WTHSLTCPAL (163 aa)) constitute a PPIase cyclophilin-type domain.

Belongs to the cyclophilin-type PPIase family. PPIase H subfamily. Interacts directly with PRPF4. Part of a heteromeric complex containing PPIH, PRPF3 and PRPF4 that is stable in the absence of RNA. Component of the U4/U6-U5 tri-snRNP complex composed of the U4, U6 and U5 snRNAs and at least PRPF3, PRPF4, PRPF6, PRPF8, PRPF31, SNRNP200, TXNL4A, SNRNP40, DDX23, CD2BP2, PPIH, SNU13, EFTUD2, SART1 and USP39. Heterodimer with PRPF18. Heterodimer with PRPF18.

The protein localises to the nucleus speckle. Its subcellular location is the cytoplasm. The catalysed reaction is [protein]-peptidylproline (omega=180) = [protein]-peptidylproline (omega=0). Inhibited by cyclosporin A. Functionally, PPIase that catalyzes the cis-trans isomerization of proline imidic peptide bonds in oligopeptides and may therefore assist protein folding. Participates in pre-mRNA splicing. May play a role in the assembly of the U4/U5/U6 tri-snRNP complex, one of the building blocks of the spliceosome. May act as a chaperone. The polypeptide is Peptidyl-prolyl cis-trans isomerase H (Ppih) (Mus musculus (Mouse)).